Here is a 476-residue protein sequence, read N- to C-terminus: Lactate utilization protein B (476 aa).

4Fe-4S ferredoxin-type domains follow at residues glycine 304–tyrosine 334 and tyrosine 353–leucine 382. Residues cysteine 313, cysteine 316, cysteine 319, cysteine 323, cysteine 366, cysteine 369, and cysteine 373 each contribute to the [4Fe-4S] cluster site.

Belongs to the LutB/YkgF family.

In terms of biological role, is involved in L-lactate degradation and allows cells to grow with lactate as the sole carbon source. Has probably a role as an electron transporter during oxidation of L-lactate. The protein is Lactate utilization protein B of Bacillus velezensis (strain DSM 23117 / BGSC 10A6 / LMG 26770 / FZB42) (Bacillus amyloliquefaciens subsp. plantarum).